A 360-amino-acid polypeptide reads, in one-letter code: Peptide chain release factor 1 (360 aa).

An N5-methylglutamine modification is found at glutamine 237.

Belongs to the prokaryotic/mitochondrial release factor family. Post-translationally, methylated by PrmC. Methylation increases the termination efficiency of RF1.

The protein resides in the cytoplasm. In terms of biological role, peptide chain release factor 1 directs the termination of translation in response to the peptide chain termination codons UAG and UAA. The protein is Peptide chain release factor 1 of Pseudomonas savastanoi pv. phaseolicola (strain 1448A / Race 6) (Pseudomonas syringae pv. phaseolicola (strain 1448A / Race 6)).